The following is a 125-amino-acid chain: MEYQFTHSIHGVVAKCSMDHEAFARWLNTEITENPKELINIFAEIEKCRAAYPNHYECVFEGKEYSLFLDCDEVMVKANNLDDAFDESQMEDGFQFYDQESIAFCGLEDFENFLKAYQKFSKTYH.

This sequence belongs to the UPF0231 family.

The polypeptide is UPF0231 protein APP7_1023 (Actinobacillus pleuropneumoniae serotype 7 (strain AP76)).